The primary structure comprises 379 residues: Probable purine permease 11 (379 aa).

A run of 10 helical transmembrane segments spans residues 43-63, 76-96, 114-134, 144-164, 167-187, 203-223, 239-259, 294-313, 314-330, and 334-354; these read WVLVSVNIFFLIGGQAASVLL, WMATLVQTAAFPILYIPLLLL, IVLIYVLLGVIIAGDNMLYSV, YSLICATQLAFNAVFSYFINA, FTALILNSVVLLSFSAALIAL, IVGFVCTLAASALYSLLLSLM, VLEMQIYTSLVATCVSVIGLF, VCSVGVVGLIFLVTSLFSNV, ISTLSLAVTPLAALVVF, and MSGVKIMAMLIAIWGFASYVY.

Belongs to the purine permeases (TC 2.A.7.14) family. In terms of assembly, may form a complex with the potassium channel subunit KAT1.

It is found in the membrane. The sequence is that of Probable purine permease 11 (PUP11) from Arabidopsis thaliana (Mouse-ear cress).